A 201-amino-acid polypeptide reads, in one-letter code: Translation initiation factor IF-3 (201 aa).

It belongs to the IF-3 family. Monomer.

It localises to the cytoplasm. In terms of biological role, IF-3 binds to the 30S ribosomal subunit and shifts the equilibrium between 70S ribosomes and their 50S and 30S subunits in favor of the free subunits, thus enhancing the availability of 30S subunits on which protein synthesis initiation begins. This chain is Translation initiation factor IF-3, found in Mycoplasma pneumoniae (strain ATCC 29342 / M129 / Subtype 1) (Mycoplasmoides pneumoniae).